The following is a 617-amino-acid chain: LEAF RUST 10 DISEASE-RESISTANCE LOCUS RECEPTOR-LIKE PROTEIN KINASE-like 2.4 (617 aa).

Residues 1 to 26 (MYYLPSSCLVLFLFFSLFYHLPCASS) form the signal peptide. The Extracellular segment spans residues 27-243 (KQTLGWCESQ…LPTRLSSEAK (217 aa)). N-linked (GlcNAc...) asparagine glycans are attached at residues Asn-41, Asn-69, Asn-86, Asn-112, and Asn-184. A helical transmembrane segment spans residues 244 to 264 (IATIAGVSLLPFLVLTLVVHI). At 265-617 (IRKQKTSNDK…SEENSISSEI (353 aa)) the chain is on the cytoplasmic side. Positions 307-594 (NSFAEVVGRG…ALEVPPRPVL (288 aa)) constitute a Protein kinase domain. ATP contacts are provided by residues 313–321 (VGRGGFGIV) and Lys-335. Tyr-380 carries the post-translational modification Phosphotyrosine. Asp-431 functions as the Proton acceptor in the catalytic mechanism. Residues Thr-468 and Thr-471 each carry the phosphothreonine modification.

The protein belongs to the protein kinase superfamily. Ser/Thr protein kinase family.

It is found in the membrane. It carries out the reaction L-seryl-[protein] + ATP = O-phospho-L-seryl-[protein] + ADP + H(+). The enzyme catalyses L-threonyl-[protein] + ATP = O-phospho-L-threonyl-[protein] + ADP + H(+). The sequence is that of LEAF RUST 10 DISEASE-RESISTANCE LOCUS RECEPTOR-LIKE PROTEIN KINASE-like 2.4 from Arabidopsis thaliana (Mouse-ear cress).